We begin with the raw amino-acid sequence, 306 residues long: MQKVLAIVGPTAIGKTDLAISLAKKLNGEIVSGDSMQVYHEVEVGTAKATKEEQAEVKHYLVDTRSVFDEYSVKDFVDEATEAINDIGEKNKLPILAGGTGFYVNALLNKMQLGERKEEDSGTSQKWEDYLKQNGPQKLWDILNEKDPEAAKKIPVPNSRRTMRALTVIDRTGKKFSQQQKKIEPRYDYLIIGLNSDRQEIYRRINLRVDRMMQKGMLEEAKFIYQNRDKEHQVLQAIAYKEFFPYFKGEKTLNECVEQLKTASRRYAKRQLTYFRNQLPVNWFDPLNDPDCEDKIIKNIEAWKNE.

9–16 (GPTAIGKT) is a binding site for ATP. 11–16 (TAIGKT) provides a ligand contact to substrate. Residues 34-37 (DSMQ) are interaction with substrate tRNA.

The protein belongs to the IPP transferase family. As to quaternary structure, monomer. The cofactor is Mg(2+).

The enzyme catalyses adenosine(37) in tRNA + dimethylallyl diphosphate = N(6)-dimethylallyladenosine(37) in tRNA + diphosphate. Functionally, catalyzes the transfer of a dimethylallyl group onto the adenine at position 37 in tRNAs that read codons beginning with uridine, leading to the formation of N6-(dimethylallyl)adenosine (i(6)A). In Lactobacillus helveticus (strain DPC 4571), this protein is tRNA dimethylallyltransferase.